We begin with the raw amino-acid sequence, 135 residues long: Large ribosomal subunit protein eL27z (135 aa).

It belongs to the eukaryotic ribosomal protein eL27 family.

The polypeptide is Large ribosomal subunit protein eL27z (RPL27A) (Arabidopsis thaliana (Mouse-ear cress)).